Consider the following 334-residue polypeptide: Putative heme-binding peroxidase (334 aa).

Histidine 40 functions as the Proton acceptor in the catalytic mechanism. Histidine 169 lines the heme b pocket. The Tryptophan radical intermediate role is filled by tryptophan 185.

Belongs to the peroxidase family. Cytochrome c peroxidase subfamily. Heme b serves as cofactor.

Its function is as follows. Destroys radicals which are normally produced within the cells and which are toxic to biological systems. In Cryptococcus neoformans var. neoformans serotype D (strain JEC21 / ATCC MYA-565) (Filobasidiella neoformans), this protein is Putative heme-binding peroxidase.